A 719-amino-acid polypeptide reads, in one-letter code: SLSGLSKVSAFIHRADIGGVLNVSELNLIKRLIQVQNQFKTFYNQLVEEDEGVKYPILDDKMNQLPVLTDLFQQINETCDTYDLYDNASYELQGIRSKISSTNQRIRQNLDRIVKSQANQKKLSDAIVTVRNERNVIPVKAEYRQDFNGIVHDQSASGQTLYIEPSSVVEMNNQISRLRHDEAIEKERILTQLTGYVAADKDALLVAEQVMGQLDFLIAKARYSRSIKGTKPIFKEERTVYLPKAYHPLLNRETVVANTIEFMEDIETVIITGPNTGGKTVTLKTLGLIIVMAQSGLLIPTLDGSQLSVFKNVYCDIGDEQSIEQSLSTFSSHMTNIVEILKNADKHSLVLFDELGAGTDPSEGAALAMSILDHVRKIGSLVMATTHYPELKAYSYNREGVMNASVEFDVDTLSPTYKLLMGVPGRSNAFDISKKLGLSLNIINKAKTMIGTDEKEINEMIESLERNYKRVETQRLELDRLVKEAEQVHDDLSKQYQQFQNYEKSLIEDAKEKANQKIKAATKEADDIIKDLRQLREQKGADVKEHELIDKKKRLDDHYEAKSIKQNVQKQKYDKIVAGDEVKVLSYGQKGEVLEIVNDEEAIVQMGIIKMKLPIEDLEKKQKEKVKPTKMVTRQNRQTIKTELDLRGYRYEDALIELDQYLDQAVLSNYEQVYIIHGKGTGALQKGVQQHLKKHKSVSDFRGGMPSEGGFGVTVATLK.

Residue 273-280 participates in ATP binding; that stretch reads GPNTGGKT. Positions 644–719 constitute a Smr domain; that stretch reads LDLRGYRYED…GFGVTVATLK (76 aa).

This sequence belongs to the DNA mismatch repair MutS family. MutS2 subfamily. As to quaternary structure, homodimer. Binds to stalled ribosomes, contacting rRNA.

Its function is as follows. Endonuclease that is involved in the suppression of homologous recombination and thus may have a key role in the control of bacterial genetic diversity. Functionally, acts as a ribosome collision sensor, splitting the ribosome into its 2 subunits. Detects stalled/collided 70S ribosomes which it binds and splits by an ATP-hydrolysis driven conformational change. Acts upstream of the ribosome quality control system (RQC), a ribosome-associated complex that mediates the extraction of incompletely synthesized nascent chains from stalled ribosomes and their subsequent degradation. Probably generates substrates for RQC. In Staphylococcus aureus, this protein is Endonuclease MutS2.